A 444-amino-acid chain; its full sequence is ATP-dependent protease ATPase subunit HslU (444 aa).

ATP-binding positions include Ile-18 and 60–65 (GVGKTE). Positions 143-163 (WGEVESHDSHSSTRQAFRKKL) are disordered. Positions 257, 322, and 394 each coordinate ATP.

Belongs to the ClpX chaperone family. HslU subfamily. As to quaternary structure, a double ring-shaped homohexamer of HslV is capped on each side by a ring-shaped HslU homohexamer. The assembly of the HslU/HslV complex is dependent on binding of ATP.

Its subcellular location is the cytoplasm. ATPase subunit of a proteasome-like degradation complex; this subunit has chaperone activity. The binding of ATP and its subsequent hydrolysis by HslU are essential for unfolding of protein substrates subsequently hydrolyzed by HslV. HslU recognizes the N-terminal part of its protein substrates and unfolds these before they are guided to HslV for hydrolysis. The sequence is that of ATP-dependent protease ATPase subunit HslU from Haemophilus influenzae (strain PittEE).